A 704-amino-acid polypeptide reads, in one-letter code: SH3KBP1-binding protein 1 (704 aa).

An N-acetylalanine modification is found at Ala2. Residues 19–88 (EVIHLNVGGK…LRTKELDPRG (70 aa)) enclose the BTB domain. A disordered region spans residues 146–165 (VGPQQIGGRPAPVRRSNTMP). Thr163 is subject to Phosphothreonine. WD repeat units lie at residues 233–280 (RLDW…GGSE), 283–322 (VFHL…WQVQ), 324–359 (VQPI…LRMK), 428–466 (VHRS…GMIS), and 548–586 (LECE…DGLG). The segment at 609 to 704 (PLTSSRASFP…PKNTLNETSF (96 aa)) is disordered. The segment covering 611–631 (TSSRASFPSPSPRTSLTSLHS) has biased composition (low complexity). The PXXXPR motif lies at 618-623 (PSPSPR). Phosphoserine is present on residues Ser644 and Ser646. Residues 678–683 (PTPAPR) carry the PXXXPR motif.

Belongs to the KCTD3 family. In terms of assembly, monomer. Interacts with CUL3; interaction is direct and forms a 5:5 heterodecamer. Interacts (via PXXXPR motifs) with SH3KBP1 (via SH3 domains). Directly interacts with cathepsin B/CTSB.

The protein resides in the lysosome. Functionally, inhibits CBL-SH3KBP1 complex mediated down-regulation of EGFR signaling by sequestration of SH3KBP1. Binds to SH3KBP1 and prevents its interaction with CBL and inhibits translocation of SH3KBP1 to EGFR containing vesicles upon EGF stimulation. The sequence is that of SH3KBP1-binding protein 1 (Shkbp1) from Rattus norvegicus (Rat).